Consider the following 553-residue polypeptide: Membrane protein insertase YidC (553 aa).

The next 5 helical transmembrane spans lie at 7 to 24 (VLWV…DNWQ), 365 to 385 (WGWA…PLSA), 435 to 455 (LPVV…LASV), 474 to 494 (PYFI…SLNP), and 509 to 529 (PIAF…YYVV).

This sequence belongs to the OXA1/ALB3/YidC family. Type 1 subfamily. As to quaternary structure, interacts with the Sec translocase complex via SecD. Specifically interacts with transmembrane segments of nascent integral membrane proteins during membrane integration.

It localises to the cell inner membrane. Functionally, required for the insertion and/or proper folding and/or complex formation of integral membrane proteins into the membrane. Involved in integration of membrane proteins that insert both dependently and independently of the Sec translocase complex, as well as at least some lipoproteins. Aids folding of multispanning membrane proteins. This Burkholderia multivorans (strain ATCC 17616 / 249) protein is Membrane protein insertase YidC.